A 118-amino-acid polypeptide reads, in one-letter code: Large ribosomal subunit protein bL17 (118 aa).

Belongs to the bacterial ribosomal protein bL17 family. As to quaternary structure, part of the 50S ribosomal subunit. Contacts protein L32.

In Gemmatimonas aurantiaca (strain DSM 14586 / JCM 11422 / NBRC 100505 / T-27), this protein is Large ribosomal subunit protein bL17.